Reading from the N-terminus, the 641-residue chain is Chaperone protein DnaK (641 aa).

At T200 the chain carries Phosphothreonine; by autocatalysis. A compositionally biased stretch (low complexity) spans 606 to 623 (AEQGGNADAASGNAQASK). The interval 606–627 (AEQGGNADAASGNAQASKAADD) is disordered.

Belongs to the heat shock protein 70 family.

Its function is as follows. Acts as a chaperone. The protein is Chaperone protein DnaK of Xanthomonas euvesicatoria pv. vesicatoria (strain 85-10) (Xanthomonas campestris pv. vesicatoria).